We begin with the raw amino-acid sequence, 321 residues long: Gap junction delta-2 protein (321 aa).

Over 1–19 (MGEWTILERLLEAAVQQHS) the chain is Cytoplasmic. A helical transmembrane segment spans residues 20–42 (TMIGRILLTVVVIFRILIVAIVG). At 43 to 75 (ETVYDDEQTMFVCNTLQPGCNQACYDRAFPISH) the chain is on the extracellular side. The helical transmembrane segment at 76–98 (IRYWVFQIIMVCTPSLCFITYSV) threads the bilayer. Topologically, residues 99–197 (HQSAKQRERR…KLRRQEGISR (99 aa)) are cytoplasmic. Residues 117 to 141 (DRDPPESMGGPGGTGGGGSGGGKRE) are disordered. Residues 125-137 (GGPGGTGGGGSGG) show a composition bias toward gly residues. The chain crosses the membrane as a helical span at residues 198 to 220 (FYIIQVVFRNALEIGFLVGQYFL). The Extracellular portion of the chain corresponds to 221 to 252 (YGFSVPGLYECDRYPCIKEVECYVSRPTEKTV). A helical transmembrane segment spans residues 253–275 (FLVFMFAVSGICVVLNLAELNHL). The Cytoplasmic portion of the chain corresponds to 276-321 (GWRKIKLAVRGAQAKRKSVYEIRNKDLPRVSVPNFGRTQSSDSAYV).

It belongs to the connexin family. Delta-type subfamily. As to quaternary structure, a connexon is composed of a hexamer of connexins.

The protein resides in the cell membrane. It is found in the cell junction. It localises to the gap junction. Its function is as follows. One gap junction consists of a cluster of closely packed pairs of transmembrane channels, the connexons, through which materials of low MW diffuse from one cell to a neighboring cell. The chain is Gap junction delta-2 protein (GJD2) from Bos taurus (Bovine).